The chain runs to 766 residues: LPS-assembly protein LptD (766 aa).

Positions 1–18 (MQIRYFLALSLLPNIVLA) are cleaved as a signal peptide.

Belongs to the LptD family. In terms of assembly, component of the lipopolysaccharide transport and assembly complex. Interacts with LptE and LptA.

The protein localises to the cell outer membrane. Together with LptE, is involved in the assembly of lipopolysaccharide (LPS) at the surface of the outer membrane. The chain is LPS-assembly protein LptD from Shewanella frigidimarina (strain NCIMB 400).